A 297-amino-acid chain; its full sequence is ATP synthase F(1) complex subunit gamma, mitochondrial (297 aa).

The transit peptide at Met1–Met25 directs the protein to the mitochondrion. The residue at position 39 (Lys39) is an N6-acetyllysine. Lys49 is subject to N6-succinyllysine. The residue at position 55 (Lys55) is an N6-acetyllysine. Position 115 is an N6-acetyllysine; alternate (Lys115). N6-succinyllysine; alternate is present on Lys115. Ser146 is subject to Phosphoserine. Lys154 carries the N6-acetyllysine; alternate modification. Lys154 is subject to N6-succinyllysine; alternate. The residue at position 197 (Lys197) is an N6-acetyllysine. Lys270 is modified (N6-succinyllysine).

Belongs to the ATPase gamma chain family. In terms of assembly, component of the ATP synthase complex composed at least of ATP5F1A/subunit alpha, ATP5F1B/subunit beta, ATP5MC1/subunit c (homooctomer), MT-ATP6/subunit a, MT-ATP8/subunit 8, ATP5ME/subunit e, ATP5MF/subunit f, ATP5MG/subunit g, ATP5MK/subunit k, ATP5MJ/subunit j, ATP5F1C/subunit gamma, ATP5F1D/subunit delta, ATP5F1E/subunit epsilon, ATP5PF/subunit F6, ATP5PB/subunit b, ATP5PD/subunit d, ATP5PO/subunit OSCP. ATP synthase complex consists of a soluble F(1) head domain (subunits alpha(3) and beta(3)) - the catalytic core - and a membrane F(0) domain - the membrane proton channel (subunits c, a, 8, e, f, g, k and j). These two domains are linked by a central stalk (subunits gamma, delta, and epsilon) rotating inside the F1 region and a stationary peripheral stalk (subunits F6, b, d, and OSCP). Interacts with FLVCR2; this interaction occurs in the absence of heme and is disrupted upon heme binding.

The protein localises to the mitochondrion inner membrane. Subunit gamma, of the mitochondrial membrane ATP synthase complex (F(1)F(0) ATP synthase or Complex V) that produces ATP from ADP in the presence of a proton gradient across the membrane which is generated by electron transport complexes of the respiratory chain. ATP synthase complex consist of a soluble F(1) head domain - the catalytic core - and a membrane F(1) domain - the membrane proton channel. These two domains are linked by a central stalk rotating inside the F(1) region and a stationary peripheral stalk. During catalysis, ATP synthesis in the catalytic domain of F(1) is coupled via a rotary mechanism of the central stalk subunits to proton translocation. In vivo, can only synthesize ATP although its ATP hydrolase activity can be activated artificially in vitro. With the central stalk subunit delta, is essential for the biogenesis of F(1) catalytic part of the ATP synthase complex namely in the formation of F1 assembly intermediate. This chain is ATP synthase F(1) complex subunit gamma, mitochondrial, found in Pongo abelii (Sumatran orangutan).